A 352-amino-acid chain; its full sequence is Biotin synthase (352 aa).

In terms of domain architecture, Radical SAM core spans 44 to 262 (NRVQVSTLLS…LAVARIMMPK (219 aa)). Positions 59, 63, and 66 each coordinate [4Fe-4S] cluster. Residues C103, C134, C194, and R266 each contribute to the [2Fe-2S] cluster site.

This sequence belongs to the radical SAM superfamily. Biotin synthase family. Homodimer. The cofactor is [4Fe-4S] cluster. Requires [2Fe-2S] cluster as cofactor.

The catalysed reaction is (4R,5S)-dethiobiotin + (sulfur carrier)-SH + 2 reduced [2Fe-2S]-[ferredoxin] + 2 S-adenosyl-L-methionine = (sulfur carrier)-H + biotin + 2 5'-deoxyadenosine + 2 L-methionine + 2 oxidized [2Fe-2S]-[ferredoxin]. Its pathway is cofactor biosynthesis; biotin biosynthesis; biotin from 7,8-diaminononanoate: step 2/2. Functionally, catalyzes the conversion of dethiobiotin (DTB) to biotin by the insertion of a sulfur atom into dethiobiotin via a radical-based mechanism. The polypeptide is Biotin synthase (Pseudomonas paraeruginosa (strain DSM 24068 / PA7) (Pseudomonas aeruginosa (strain PA7))).